Reading from the N-terminus, the 539-residue chain is Eukaryotic translation initiation factor 3 subunit L (539 aa).

The region spanning 306 to 514 (TFSDILLYIQ…IHIADTKVSH (209 aa)) is the PCI domain.

Belongs to the eIF-3 subunit L family. Component of the eukaryotic translation initiation factor 3 (eIF-3) complex. The eIF-3 complex interacts with pix.

It is found in the cytoplasm. Component of the eukaryotic translation initiation factor 3 (eIF-3) complex, which is involved in protein synthesis of a specialized repertoire of mRNAs and, together with other initiation factors, stimulates binding of mRNA and methionyl-tRNAi to the 40S ribosome. The eIF-3 complex specifically targets and initiates translation of a subset of mRNAs involved in cell proliferation. The sequence is that of Eukaryotic translation initiation factor 3 subunit L from Drosophila melanogaster (Fruit fly).